Reading from the N-terminus, the 200-residue chain is Kunitz type trypsin inhibitor 111 (200 aa).

A signal peptide spans 1–24 (MSTISFTIFILANVWLLVVTTSIA). 3 cysteine pairs are disulfide-bonded: Cys-62/Cys-108, Cys-160/Cys-172, and Cys-165/Cys-168.

It belongs to the protease inhibitor I3 (leguminous Kunitz-type inhibitor) family. Interacts with SCP1.

The protein localises to the secreted. Its subcellular location is the extracellular space. It is found in the apoplast. This chain is Kunitz type trypsin inhibitor 111 (KPI111), found in Medicago truncatula (Barrel medic).